A 275-amino-acid polypeptide reads, in one-letter code: Diaminopimelate epimerase (275 aa).

Residues asparagine 12, glutamine 45, and asparagine 65 each coordinate substrate. Cysteine 74 functions as the Proton donor in the catalytic mechanism. Substrate-binding positions include 75–76 (GN), asparagine 158, asparagine 191, and 209–210 (ER). Cysteine 218 acts as the Proton acceptor in catalysis. A substrate-binding site is contributed by 219-220 (GT).

Belongs to the diaminopimelate epimerase family. Homodimer.

Its subcellular location is the cytoplasm. The enzyme catalyses (2S,6S)-2,6-diaminopimelate = meso-2,6-diaminopimelate. Its pathway is amino-acid biosynthesis; L-lysine biosynthesis via DAP pathway; DL-2,6-diaminopimelate from LL-2,6-diaminopimelate: step 1/1. Catalyzes the stereoinversion of LL-2,6-diaminopimelate (L,L-DAP) to meso-diaminopimelate (meso-DAP), a precursor of L-lysine and an essential component of the bacterial peptidoglycan. The sequence is that of Diaminopimelate epimerase from Shewanella baltica (strain OS223).